Reading from the N-terminus, the 493-residue chain is Ketol-acid reductoisomerase (NADP(+)) (493 aa).

The KARI N-terminal Rossmann domain maps to leucine 14 to serine 208. Residues cysteine 45–glutamine 48, arginine 68, arginine 76, serine 78, and aspartate 108–glutamine 110 contribute to the NADP(+) site. Histidine 132 is an active-site residue. Glycine 158 serves as a coordination point for NADP(+). KARI C-terminal knotted domains follow at residues serine 209 to alanine 345 and aspartate 346 to methionine 486. Mg(2+)-binding residues include aspartate 217, glutamate 221, glutamate 390, and glutamate 394. Serine 415 provides a ligand contact to substrate.

This sequence belongs to the ketol-acid reductoisomerase family. Mg(2+) serves as cofactor.

The enzyme catalyses (2R)-2,3-dihydroxy-3-methylbutanoate + NADP(+) = (2S)-2-acetolactate + NADPH + H(+). It catalyses the reaction (2R,3R)-2,3-dihydroxy-3-methylpentanoate + NADP(+) = (S)-2-ethyl-2-hydroxy-3-oxobutanoate + NADPH + H(+). The protein operates within amino-acid biosynthesis; L-isoleucine biosynthesis; L-isoleucine from 2-oxobutanoate: step 2/4. It participates in amino-acid biosynthesis; L-valine biosynthesis; L-valine from pyruvate: step 2/4. Its function is as follows. Involved in the biosynthesis of branched-chain amino acids (BCAA). Catalyzes an alkyl-migration followed by a ketol-acid reduction of (S)-2-acetolactate (S2AL) to yield (R)-2,3-dihydroxy-isovalerate. In the isomerase reaction, S2AL is rearranged via a Mg-dependent methyl migration to produce 3-hydroxy-3-methyl-2-ketobutyrate (HMKB). In the reductase reaction, this 2-ketoacid undergoes a metal-dependent reduction by NADPH to yield (R)-2,3-dihydroxy-isovalerate. The chain is Ketol-acid reductoisomerase (NADP(+)) from Actinobacillus succinogenes (strain ATCC 55618 / DSM 22257 / CCUG 43843 / 130Z).